The sequence spans 200 residues: BREX protein BrxA (200 aa).

The protein belongs to the BrxA family.

Functionally, BREX systems (bacteriophage exclusion) provide immunity against bacteriophage. Part of a type 1 BREX system. This system allows phage adsorption but prevents phage DNA replication, without degradation of the phage DNA. Methylation of bacterial DNA by PglX probably guides self/non-self discrimination. When the brxA-brxB-brxC-pglX and pglZ-brxL operons are transformed into a susceptible B.subtilis strain (BEST7003) they confer resistance to bacteriophages SPbeta, SP16, Zeta, phi3T and SP02 and partial protection to phages SP01 and SP82G (these include lytic and temperate phage). They do not protect against phages phi105, rho10 or rho14. Additionally confers a very slight reduction in efficiency of plasmid transformation. This Bacillus cereus (strain H3081.97) protein is BREX protein BrxA.